Reading from the N-terminus, the 79-residue chain is Virulence protein MsgA (79 aa).

It belongs to the DinI family.

In terms of biological role, affects survival in macrophages. The chain is Virulence protein MsgA (msgA) from Salmonella typhi.